The following is a 124-amino-acid chain: Small ribosomal subunit protein bS6 (124 aa).

The span at 105-115 (EVQHEEARKSA) shows a compositional bias: basic and acidic residues. The interval 105–124 (EVQHEEARKSAQSDAPVAAA) is disordered.

It belongs to the bacterial ribosomal protein bS6 family.

Binds together with bS18 to 16S ribosomal RNA. The protein is Small ribosomal subunit protein bS6 of Polynucleobacter necessarius subsp. necessarius (strain STIR1).